The primary structure comprises 56 residues: Botcinic acid biosynthesis cluster B protein 14 (56 aa).

It participates in polyketide biosynthesis. Its function is as follows. Part of the gene cluster B that mediates the biosynthesis of botcinic acid and its botcinin derivatives, acetate-derived polyketides that contribute to virulence when combined with the sesquiterpene botrydial. Botcinic acid and its derivatives have been shown to induce chlorosis and necrosis during host plant infection, but also have antifungal activities. Two polyketide synthases, BOA6 and BOA9, are involved in the biosynthesis of botcinins. BOA6 mediates the formation of the per-methylated tetraketide core by condensation of four units of malonyl-CoA with one unit of acetyl-CoA, which would be methylated in activated methylene groups to yield a bicyclic acid intermediate that could then either be converted to botrylactone derivatives or lose the starter acetate unit through a retro-Claisen type C-C bond cleavage to yield botcinin derivatives. The second polyketide synthase, BOA9, is probably required for the biosynthesis of the tetraketide side chain of botcinins. The methyltransferase (MT) domain within BOA6 is probably responsible for the incorporation of four methyl groups. The trans-enoyl reductase BOA5 might take over the enoyl reductase function of BOA6 that misses an ER domain. The monooxygenases BOA2, BOA3 and BOA4 might be involved in further hydroxylations at C4, C5 and C8, whereas BOA7, close to BOA9, could potentially be involved in the hydroxylation at C4 in the side chain of botcinins. The polypeptide is Botcinic acid biosynthesis cluster B protein 14 (Botryotinia fuckeliana (strain B05.10) (Noble rot fungus)).